Consider the following 281-residue polypeptide: Tetraspanin-5 (281 aa).

Residues 1–7 lie on the Cytoplasmic side of the membrane; sequence MNRMSNT. The helical transmembrane segment at 8–28 threads the bilayer; it reads VIGFLNILTLISSIVLLGSAL. Residues 29 to 44 lie on the Extracellular side of the membrane; that stretch reads WMGRSKTTCEHFLQKP. A helical membrane pass occupies residues 45–65; that stretch reads LLILGLAILILSVAGLVGACC. The Cytoplasmic portion of the chain corresponds to 66-74; that stretch reads DVAWVLWVY. The chain crosses the membrane as a helical span at residues 75–95; that stretch reads LFFMVFIIVALMGLTLFGFIV. The Extracellular portion of the chain corresponds to 96–221; that stretch reads TSHSGGVVVD…TVRRDWHKLS (126 aa). Residues 222–242 traverse the membrane as a helical segment; that stretch reads LVNVIVVIFLIAVYCVGCCAF. The Cytoplasmic portion of the chain corresponds to 243–281; that stretch reads KNAKRPQHYGFPYGRYGMSKSRPGWEQSWSRWWHGRDRY.

It belongs to the tetraspanin (TM4SF) family.

The protein resides in the membrane. In terms of biological role, may be involved in the regulation of cell differentiation. This chain is Tetraspanin-5 (TET5), found in Arabidopsis thaliana (Mouse-ear cress).